A 450-amino-acid polypeptide reads, in one-letter code: Probable galactarate/D-glucarate transporter GudP (450 aa).

At 1–20 the chain is on the cytoplasmic side; it reads MSSLSQAASSVEKRTNARYW. Residues 21–41 traverse the membrane as a helical segment; that stretch reads IVVMLFIVTSFNYGDRATLSI. At 42–58 the chain is on the periplasmic side; that stretch reads AGSEMAKDIGLDPVGMG. The chain crosses the membrane as a helical span at residues 59-79; it reads YVFSAFSWAYVIGQIPGGWLL. Residues 80-85 lie on the Cytoplasmic side of the membrane; it reads DRFGSK. The helical transmembrane segment at 86–105 threads the bilayer; it reads RVYFWSIFIWSMFTLLQGFV. The Periplasmic portion of the chain corresponds to 106–109; it reads DIFS. A helical transmembrane segment spans residues 110–132; sequence GFGIIVALFTLRFLVGLAEAPSF. Residues 133-153 lie on the Cytoplasmic side of the membrane; that stretch reads PGNSRIVAAWFPAQERGTAVS. The helical transmembrane segment at 154 to 174 threads the bilayer; the sequence is IFNSAQYFATVIFAPIMGWLT. At 175–176 the chain is on the periplasmic side; it reads HE. The chain crosses the membrane as a helical span at residues 177-197; sequence VGWSHVFFFMGGLGIVISFIW. The Cytoplasmic segment spans residues 198 to 254; it reads LKVIHEPNQHPGVNKKELEYIAAGGALINMDQQNTKVKVPFSVKWGQIKQLLGSRMM. A helical membrane pass occupies residues 255–275; that stretch reads IGVYIGQYCINALTYFFITWF. The Periplasmic segment spans residues 276–290; that stretch reads PVYLVQARGMSILKA. A helical transmembrane segment spans residues 291 to 311; the sequence is GFVASVPAVCGFIGGVLGGII. At 312–329 the chain is on the cytoplasmic side; that stretch reads SDWLMRRTGSLNIARKTP. Residues 330–350 form a helical membrane-spanning segment; sequence IVMGMLLSMVMVFCNYVNVEW. Met-351 is a topological domain (periplasmic). A helical membrane pass occupies residues 352–372; the sequence is IIGFMALAFFGKGIGALGWAV. Topologically, residues 373–387 are cytoplasmic; it reads MADTAPKEISGLSGG. The chain crosses the membrane as a helical span at residues 388-408; that stretch reads LFNMFGNISGIVTPIAIGYIV. Topologically, residues 409–415 are periplasmic; that stretch reads GTTGSFN. The chain crosses the membrane as a helical span at residues 416-436; the sequence is GALIYVGVHALIAVLSYLVLV. The Cytoplasmic portion of the chain corresponds to 437–450; that stretch reads GDIKRIELKPVAGQ.

This sequence belongs to the major facilitator superfamily. Phthalate permease family.

Its subcellular location is the cell inner membrane. The enzyme catalyses galactarate(in) + H(+)(in) = galactarate(out) + H(+)(out). It carries out the reaction D-glucarate(in) + H(+)(in) = D-glucarate(out) + H(+)(out). It catalyses the reaction (R)-glycerate(in) + H(+)(in) = (R)-glycerate(out) + H(+)(out). Probably involved in the uptake of galactarate and/or D-glucarate. May also transport D-glycerate. The sequence is that of Probable galactarate/D-glucarate transporter GudP from Escherichia coli (strain K12).